A 186-amino-acid polypeptide reads, in one-letter code: PR-toxin biosynthesis cluster protein 7 (186 aa).

A helical membrane pass occupies residues 24–43 (LGEVTTGGVTPRGTFIFCPI).

It localises to the membrane. It functions in the pathway sesquiterpene biosynthesis. Part of the gene cluster that mediates the biosynthesis of PR-toxin, a bicyclic sesquiterpene belonging to the eremophilane class and acting as a mycotoxin. The first step of the pathway is catalyzed by the aristolochene synthase which performs the cyclization of trans,trans-farnesyl diphosphate (FPP) to the bicyclic sesquiterpene aristolochene. Following the formation of aristolochene, the non-oxygenated aristolochene is converted to the trioxygenated intermediate eremofortin B, via 7-epi-neopetasone. This conversion appears to involve three enzymes, a hydroxysterol oxidase-like enzyme, the quinone-oxidase prx3 that forms the quinone-type-structure in the bicyclic nucleus of aristolochene with the C8-oxo group and the C-3 hydroxyl group, and the P450 monooxygenase ORF6 that introduces the epoxide at the double bond between carbons 1 and 2. No monoxy or dioxy-intermediates have been reported to be released to the broth, so these three early oxidative reactions may be coupled together. Eremofortin B is further oxidized by another P450 monooxygenase, that introduces a second epoxide between carbons 7 and 11 prior to acetylation to eremofortin A by the acetyltransferase ORF8. The second epoxidation may be performed by a second P450 monooxygenase. After the acetylation step, eremofortin A is converted to eremofortin C and then to PR-toxin. First the conversion of eremofortin A to eremofortin C proceeds by oxidation of the side chain of the molecule at C-12 and is catalyzed by the short-chain oxidoreductase prx1. The cytochrome P450 monooxygenase ORF6 is probably also involved in this step. The primary alcohol formed at C-12 is finally oxidized by the short-chain alcohol dehydrogenase prx4 that forms PR-toxin. The chain is PR-toxin biosynthesis cluster protein 7 from Penicillium roqueforti (strain FM164).